We begin with the raw amino-acid sequence, 100 residues long: Ubiquitin-related modifier 1 homolog (100 aa).

1-thioglycine is present on Gly100. Gly100 participates in a covalent cross-link: Glycyl lysine isopeptide (Gly-Lys) (interchain with K-? in acceptor proteins).

This sequence belongs to the URM1 family. Interacts with cer. Post-translationally, C-terminal thiocarboxylation occurs in 2 steps, it is first acyl-adenylated (-COAMP) via the hesA/moeB/thiF part of the MOCS3 homolog, then thiocarboxylated (-COSH) via the rhodanese domain of the MOCS3 homolog.

Its subcellular location is the cytoplasm. It participates in tRNA modification; 5-methoxycarbonylmethyl-2-thiouridine-tRNA biosynthesis. Functionally, acts as a sulfur carrier required for 2-thiolation of mcm(5)S(2)U at tRNA wobble positions of cytosolic tRNA(Lys), tRNA(Glu) and tRNA(Gln). Serves as sulfur donor in tRNA 2-thiolation reaction by being thiocarboxylated (-COSH) at its C-terminus by MOCS3. The sulfur is then transferred to tRNA to form 2-thiolation of mcm(5)S(2)U. Also acts as a ubiquitin-like protein (UBL) that is covalently conjugated via an isopeptide bond to lysine residues of target proteins such as Prx2/Jafrac1, Ciao1, Eip71CD and GILT1. The thiocarboxylated form serves as substrate for conjugation and oxidative stress specifically induces the formation of UBL-protein conjugates. The chain is Ubiquitin-related modifier 1 homolog from Drosophila willistoni (Fruit fly).